We begin with the raw amino-acid sequence, 146 residues long: Basic phospholipase A2 73 (146 aa).

The N-terminal stretch at 1–19 is a signal peptide; it reads MYPAHLLVLLAVCVSLLGA. Residues 20–27 constitute a propeptide that is removed on maturation; that stretch reads ASIPPLPL. Intrachain disulfides connect Cys-38/Cys-98, Cys-54/Cys-145, Cys-56/Cys-72, Cys-71/Cys-126, Cys-78/Cys-119, Cys-87/Cys-112, and Cys-105/Cys-117. Positions 55, 57, and 59 each coordinate Ca(2+). Residue His-75 is part of the active site. Asp-76 contacts Ca(2+). Asp-120 is a catalytic residue.

This sequence belongs to the phospholipase A2 family. Group I subfamily. D49 sub-subfamily. It depends on Ca(2+) as a cofactor. In terms of tissue distribution, expressed by the venom gland.

It is found in the secreted. It carries out the reaction a 1,2-diacyl-sn-glycero-3-phosphocholine + H2O = a 1-acyl-sn-glycero-3-phosphocholine + a fatty acid + H(+). Its function is as follows. Snake venom phospholipase A2 (PLA2) that inhibits neuromuscular transmission by blocking acetylcholine release from the nerve termini. PLA2 catalyzes the calcium-dependent hydrolysis of the 2-acyl groups in 3-sn-phosphoglycerides. This is Basic phospholipase A2 73 from Hydrophis hardwickii (Hardwick's spine-bellied seasnake).